Here is a 585-residue protein sequence, read N- to C-terminus: Staphyloferrin A synthase (585 aa).

It belongs to the IucA/IucC family.

The enzyme catalyses N(5)-[(S)-citryl]-D-ornithine + citrate + ATP = staphyloferrin A + AMP + diphosphate + H(+). It participates in siderophore biosynthesis. Involved in the biosynthesis of the siderophore staphyloferrin A. Catalyzes the ATP-dependent condensation of a citryl-D-ornithine intermediate, produced by SfnaD, and citrate to form staphyloferrin A. In Staphylococcus aureus (strain NCTC 8325 / PS 47), this protein is Staphyloferrin A synthase.